A 320-amino-acid polypeptide reads, in one-letter code: MVEVRHSRVIILGSGPAGYSAAVYAARANLKPLLITGMQAGGQLTTTTEVDNWPGDVHGLTGPALMERMREHAERFETEIVFDHINAVDFAAKPYTLTGDSATYTCDALIIATGASARYLGLPSEEAFMGKGVSACATCDGFFYRNKPVAVVGGGNTAVEEALYLANIASTVTLIHRRETFRAEKILIDKLNARVAEGKIILKLNANLDEVLGDNMGVTGARLKNNDGSFDELKVDGVFIAIGHTPNTSLFEGQLTLKDGYLVVQGGRDGNATATSVEGIFAAGDVADHVYRQAITSAGAGCMAALDTERYLDGLQNASE.

36–43 is an FAD binding site; the sequence is TGMQAGGQ. An intrachain disulfide couples Cys136 to Cys139. Residue 285–294 coordinates FAD; it reads DVADHVYRQA.

This sequence belongs to the class-II pyridine nucleotide-disulfide oxidoreductase family.

The enzyme catalyses 2-amino-2-deoxy-D-gluconate = 2-dehydro-3-deoxy-D-gluconate + NH4(+). In terms of biological role, catalyzes the conversion of 2-amino-2-deoxy-D-gluconate (GlcNA) to 2-keto-3-deoxy-D-gluconic acid (KDGA) and ammonia. The sequence is that of Glucosaminate ammonia-lyase from Pseudomonas fluorescens.